The chain runs to 103 residues: Phosphoribosyl-ATP pyrophosphatase (103 aa).

Residues 84-103 (LQSREGKLSKTSDRKEINDL) form a disordered region.

Belongs to the PRA-PH family.

It is found in the cytoplasm. The enzyme catalyses 1-(5-phospho-beta-D-ribosyl)-ATP + H2O = 1-(5-phospho-beta-D-ribosyl)-5'-AMP + diphosphate + H(+). The protein operates within amino-acid biosynthesis; L-histidine biosynthesis; L-histidine from 5-phospho-alpha-D-ribose 1-diphosphate: step 2/9. The polypeptide is Phosphoribosyl-ATP pyrophosphatase (hisE) (Listeria innocua serovar 6a (strain ATCC BAA-680 / CLIP 11262)).